Reading from the N-terminus, the 348-residue chain is Protein RecA (348 aa).

Residue 66–73 coordinates ATP; that stretch reads GPESSGKT.

Belongs to the RecA family.

The protein localises to the cytoplasm. Functionally, can catalyze the hydrolysis of ATP in the presence of single-stranded DNA, the ATP-dependent uptake of single-stranded DNA by duplex DNA, and the ATP-dependent hybridization of homologous single-stranded DNAs. It interacts with LexA causing its activation and leading to its autocatalytic cleavage. The sequence is that of Protein RecA from Neisseria meningitidis serogroup A / serotype 4A (strain DSM 15465 / Z2491).